A 326-amino-acid chain; its full sequence is ATP-dependent 6-phosphofructokinase (326 aa).

Residue Gly14 participates in ATP binding. Position 24–28 (24–28 (RAVVR)) interacts with ADP. Residues 75–76 (RF) and 105–108 (GNGS) contribute to the ATP site. Asn106 is a binding site for Mg(2+). 129 to 131 (TID) is a binding site for substrate. The Proton acceptor role is filled by Asp131. An ADP-binding site is contributed by Arg158. Residues Arg166 and 173–175 (MGR) contribute to the substrate site. ADP is bound by residues 189-191 (GAE), Lys215, and 216-218 (KSA). Substrate contacts are provided by residues Glu225, Arg248, and 254-257 (HTQR).

It belongs to the phosphofructokinase type A (PFKA) family. ATP-dependent PFK group I subfamily. Prokaryotic clade 'B1' sub-subfamily. Homotetramer. The cofactor is Mg(2+).

It is found in the cytoplasm. It carries out the reaction beta-D-fructose 6-phosphate + ATP = beta-D-fructose 1,6-bisphosphate + ADP + H(+). The protein operates within carbohydrate degradation; glycolysis; D-glyceraldehyde 3-phosphate and glycerone phosphate from D-glucose: step 3/4. Its activity is regulated as follows. Allosterically activated by ADP and other diphosphonucleosides, and allosterically inhibited by phosphoenolpyruvate. Catalyzes the phosphorylation of D-fructose 6-phosphate to fructose 1,6-bisphosphate by ATP, the first committing step of glycolysis. In Coxiella burnetii (strain RSA 493 / Nine Mile phase I), this protein is ATP-dependent 6-phosphofructokinase.